Here is a 410-residue protein sequence, read N- to C-terminus: Peptidase T (410 aa).

Histidine 79 contacts Zn(2+). The active site involves aspartate 81. Aspartate 142 lines the Zn(2+) pocket. Glutamate 176 acts as the Proton acceptor in catalysis. Zn(2+) contacts are provided by glutamate 177, aspartate 199, and histidine 381.

It belongs to the peptidase M20B family. The cofactor is Zn(2+).

The protein localises to the cytoplasm. It carries out the reaction Release of the N-terminal residue from a tripeptide.. Functionally, cleaves the N-terminal amino acid of tripeptides. The sequence is that of Peptidase T from Bacillus pumilus (strain SAFR-032).